We begin with the raw amino-acid sequence, 308 residues long: MTHLFALSELPLDEIHRLLDEAEAFRSGRIWRPAAPMYVANLFFEPSTRTKCSFEMAERKLGLHVIPFDPERSSVQKGETLYDTVRTLEAIGVDAVVIRHHEDAYFEALRHAVGIPIINAGDGCGHHPTQSLLDLLTIRQEFGAFTGLTVAIIGDIRHSRVARSNAEVLTRLGANVLFSGPAEWKDETNPYGTYVEVDEAIARADVVMLLRIQHERHAETMGLTKEEYHARYGLTLERARRMKSGAIILHPAPVNRGVEIASELVEAKASRIFKQMENGVYVRMAVLKRAMEGRMEHGRMAEKWHVVQ.

Carbamoyl phosphate contacts are provided by R49 and T50. K77 is a binding site for L-aspartate. 3 residues coordinate carbamoyl phosphate: R99, H127, and Q130. Residues R160 and R211 each contribute to the L-aspartate site. A252 and P253 together coordinate carbamoyl phosphate.

Belongs to the aspartate/ornithine carbamoyltransferase superfamily. ATCase family. Heterododecamer (2C3:3R2) of six catalytic PyrB chains organized as two trimers (C3), and six regulatory PyrI chains organized as three dimers (R2).

The enzyme catalyses carbamoyl phosphate + L-aspartate = N-carbamoyl-L-aspartate + phosphate + H(+). Its pathway is pyrimidine metabolism; UMP biosynthesis via de novo pathway; (S)-dihydroorotate from bicarbonate: step 2/3. Its function is as follows. Catalyzes the condensation of carbamoyl phosphate and aspartate to form carbamoyl aspartate and inorganic phosphate, the committed step in the de novo pyrimidine nucleotide biosynthesis pathway. This is Aspartate carbamoyltransferase catalytic subunit from Geobacillus kaustophilus (strain HTA426).